We begin with the raw amino-acid sequence, 248 residues long: Tropomyosin alpha-4 chain (248 aa).

At A2 the chain carries N-acetylalanine. Residues 2 to 248 (AGLNSLEAVK…DQTLNELNCI (247 aa)) adopt a coiled-coil conformation. The residue at position 6 (S6) is a Phosphoserine. Residues 15–47 (QALQQQADEAEDRAQGLQRELDGERERREKAEG) are disordered. Positions 33-47 (RELDGERERREKAEG) are enriched in basic and acidic residues. N6-acetyllysine occurs at positions 177 and 215. T216 carries the phosphothreonine modification.

It belongs to the tropomyosin family. Homodimer. Heterodimer of an alpha (TPM1, TPM3 or TPM4) and a beta (TPM2) chain. In terms of tissue distribution, detected in cardiac tissue and platelets, the form found in cardiac tissue is a higher molecular weight than the form found in platelets. Expressed at higher levels in the platelets of hypertensive patients with cardiac hypertrophy than in the platelets of hypertensive patients without cardiac hypertrophy (at protein level).

It is found in the cytoplasm. It localises to the cytoskeleton. Functionally, binds to actin filaments in muscle and non-muscle cells. Plays a central role, in association with the troponin complex, in the calcium dependent regulation of vertebrate striated muscle contraction. Smooth muscle contraction is regulated by interaction with caldesmon. In non-muscle cells is implicated in stabilizing cytoskeleton actin filaments. Binds calcium. Plays a role in platelet biogenesis. The sequence is that of Tropomyosin alpha-4 chain (TPM4) from Homo sapiens (Human).